The chain runs to 275 residues: 4-deoxy-L-threo-5-hexosulose-uronate ketol-isomerase (275 aa).

Zn(2+) contacts are provided by histidine 193, histidine 195, glutamate 200, and histidine 242.

It belongs to the KduI family. Requires Zn(2+) as cofactor.

It catalyses the reaction 5-dehydro-4-deoxy-D-glucuronate = 3-deoxy-D-glycero-2,5-hexodiulosonate. The protein operates within glycan metabolism; pectin degradation; 2-dehydro-3-deoxy-D-gluconate from pectin: step 4/5. Its function is as follows. Catalyzes the isomerization of 5-dehydro-4-deoxy-D-glucuronate to 3-deoxy-D-glycero-2,5-hexodiulosonate. This chain is 4-deoxy-L-threo-5-hexosulose-uronate ketol-isomerase, found in Bacillus pumilus (strain SAFR-032).